The sequence spans 336 residues: Eukaryotic translation initiation factor 3 subunit H (336 aa).

In terms of domain architecture, MPN spans 21-154; it reads VQCDGLAAMK…LKAYRLTPQA (134 aa).

This sequence belongs to the eIF-3 subunit H family. In terms of assembly, component of the eukaryotic translation initiation factor 3 (eIF-3) complex.

The protein localises to the cytoplasm. Component of the eukaryotic translation initiation factor 3 (eIF-3) complex, which is involved in protein synthesis of a specialized repertoire of mRNAs and, together with other initiation factors, stimulates binding of mRNA and methionyl-tRNAi to the 40S ribosome. The eIF-3 complex specifically targets and initiates translation of a subset of mRNAs involved in cell proliferation. The chain is Eukaryotic translation initiation factor 3 subunit H from Aedes aegypti (Yellowfever mosquito).